The primary structure comprises 396 residues: Elongation factor Tu (396 aa).

A tr-type G domain is found at 10–206; it reads KPHVNIGTIG…AVDEYIPTPQ (197 aa). Residues 19–26 are G1; that stretch reads GHVDHGKT. 19-26 lines the GTP pocket; that stretch reads GHVDHGKT. Threonine 26 is a Mg(2+) binding site. The G2 stretch occupies residues 60–64; the sequence is GITIS. The G3 stretch occupies residues 81 to 84; it reads DCPG. GTP is bound by residues 81 to 85 and 136 to 139; these read DCPGH and NKVD. Residues 136–139 form a G4 region; it reads NKVD. Residues 174–176 form a G5 region; the sequence is SAL.

It belongs to the TRAFAC class translation factor GTPase superfamily. Classic translation factor GTPase family. EF-Tu/EF-1A subfamily. Monomer.

It is found in the cytoplasm. The catalysed reaction is GTP + H2O = GDP + phosphate + H(+). In terms of biological role, GTP hydrolase that promotes the GTP-dependent binding of aminoacyl-tRNA to the A-site of ribosomes during protein biosynthesis. This chain is Elongation factor Tu, found in Stigmatella aurantiaca.